A 301-amino-acid polypeptide reads, in one-letter code: Probable splicing factor ECU05_1440 (301 aa).

The 70-residue stretch at 1–70 (MQIFIGKIPN…APISVERANG (70 aa)) folds into the RRM 1 domain. 2 disordered regions span residues 106 to 140 (PPMRYESRSPGRYDPRFSDRYGGRSPEYRGDSFRM) and 255 to 301 (SKDE…AEND). Basic and acidic residues-rich tracts occupy residues 110–140 (YESRSPGRYDPRFSDRYGGRSPEYRGDSFRM) and 255–270 (SKDEYKSRERESHMRS). The 74-residue stretch at 182–255 (LKVVFENIAP…HILKTRSYLS (74 aa)) folds into the RRM 2 domain.

This sequence belongs to the splicing factor SR family.

Its subcellular location is the nucleus. In terms of biological role, plays a role in splicing. This chain is Probable splicing factor ECU05_1440, found in Encephalitozoon cuniculi (strain GB-M1) (Microsporidian parasite).